Consider the following 944-residue polypeptide: Leucine--tRNA ligase (944 aa).

The short motif at 40–51 (PYPSGAGLHVGH) is the 'HIGH' region element. Positions 718–722 (KMSKS) match the 'KMSKS' region motif. K721 contributes to the ATP binding site.

Belongs to the class-I aminoacyl-tRNA synthetase family.

It is found in the cytoplasm. The catalysed reaction is tRNA(Leu) + L-leucine + ATP = L-leucyl-tRNA(Leu) + AMP + diphosphate. The polypeptide is Leucine--tRNA ligase (Phocaeicola vulgatus (strain ATCC 8482 / DSM 1447 / JCM 5826 / CCUG 4940 / NBRC 14291 / NCTC 11154) (Bacteroides vulgatus)).